The sequence spans 180 residues: Chromosome-anchoring protein RacA (180 aa).

A DNA-binding region (H-T-H motif) is located at residues 5-25; that stretch reads TPFIAKKLGVSPKAVVRIAQQ. Residues 89 to 151 are a coiled coil; sequence SHDFEQLTAQ…LEATLKKEEP (63 aa).

The protein belongs to the RacA family.

Its subcellular location is the cytoplasm. Required for the formation of axial filaments and for anchoring the origin regions at the cell poles in sporulating cells, thus ensuring proper chromosome segregation in the prespore. Binds in a dispersed manner throughout the chromosome but preferentially to sites clustered in the origin portion of the chromosome, causing condensation of the chromosome and its remodeling into an elongated, anchored structure. The polypeptide is Chromosome-anchoring protein RacA (Bacillus cereus (strain ATCC 10987 / NRS 248)).